The following is a 22-amino-acid chain: Melittin-like peptide (22 aa).

Glutamine 22 is subject to Glutamine amide.

In terms of tissue distribution, expressed by the skin dorsal glands.

The protein resides in the secreted. The protein is Melittin-like peptide of Rana temporaria (European common frog).